A 1048-amino-acid polypeptide reads, in one-letter code: Dyslexia-associated protein KIAA0319-like protein (1048 aa).

The Cytoplasmic portion of the chain corresponds to 1–29 (MEKRLGVKPSPASWVLPGYCWQTSVKLPR). A helical membrane pass occupies residues 30–50 (SLYLLYSFFCFSVLWLSTDAD). Positions 49 to 127 (ADESRCQQGK…PFRTDSSNSM (79 aa)) constitute an MANSC domain. The Extracellular segment spans residues 51–928 (ESRCQQGKTL…RDGDSNCEWS (878 aa)). Disordered regions lie at residues 198–218 (HGAM…LSPT) and 231–300 (SFTS…STSA). Positions 231 to 241 (SFTSNHTTQTP) are enriched in polar residues. Asparagine 246 carries an N-linked (GlcNAc...) asparagine glycan. Low complexity-rich tracts occupy residues 247–261 (VSIH…SPVS) and 287–300 (ATPT…STSA). 5 PKD domains span residues 309 to 400 (VVSA…VKPE), 408 to 497 (VAVV…VNKA), 503 to 593 (VANA…VQPE), 599 to 687 (QADA…VKEE), and 693 to 784 (VAKI…VKPD). N-linked (GlcNAc...) asparagine glycosylation occurs at asparagine 394. The tract at residues 593–623 (ENNKPPQADAGPDKELTLPVDSTTLDGSKST) is disordered. A helical transmembrane segment spans residues 929-949 (VLYVIIASFVIVVALGILSWT). Topologically, residues 950-1048 (TICCCKRQKG…KSRSAREEIL (99 aa)) are cytoplasmic. Residue threonine 973 is modified to Phosphothreonine. Serine 977 bears the Phosphoserine mark. A disordered region spans residues 980–1007 (LKPTSRAGSKQKGPTLSSSLMHSESELD). Residues 985–994 (RAGSKQKGPT) show a composition bias toward polar residues. A phosphoserine mark is found at serine 1008 and serine 1030. The interval 1024 to 1048 (LYGQNGSVPNGQTPLKSRSAREEIL) is disordered. Polar residues predominate over residues 1027–1039 (QNGSVPNGQTPLK). Position 1036 is a phosphothreonine (threonine 1036).

As to quaternary structure, interacts with RTN4R. Post-translationally, N-glycosylated.

The protein resides in the cytoplasmic granule membrane. It localises to the golgi apparatus membrane. Its subcellular location is the golgi apparatus. It is found in the trans-Golgi network membrane. The protein localises to the cell membrane. Possible role in axon guidance through interaction with RTN4R. Functionally, (Microbial infection) Acts as a receptor for adeno-associated virus and is involved in adeno-associated virus infection through endocytosis system. This is Dyslexia-associated protein KIAA0319-like protein from Mus musculus (Mouse).